We begin with the raw amino-acid sequence, 222 residues long: Phosphoribosylformylglycinamidine synthase subunit PurQ (222 aa).

The Glutamine amidotransferase type-1 domain occupies 3-222 (SAVVLLPGLN…LFEGALGIAA (220 aa)). Cys86 acts as the Nucleophile in catalysis. Active-site residues include His196 and Glu198.

As to quaternary structure, part of the FGAM synthase complex composed of 1 PurL, 1 PurQ and 2 PurS subunits.

The protein resides in the cytoplasm. It catalyses the reaction N(2)-formyl-N(1)-(5-phospho-beta-D-ribosyl)glycinamide + L-glutamine + ATP + H2O = 2-formamido-N(1)-(5-O-phospho-beta-D-ribosyl)acetamidine + L-glutamate + ADP + phosphate + H(+). The catalysed reaction is L-glutamine + H2O = L-glutamate + NH4(+). The protein operates within purine metabolism; IMP biosynthesis via de novo pathway; 5-amino-1-(5-phospho-D-ribosyl)imidazole from N(2)-formyl-N(1)-(5-phospho-D-ribosyl)glycinamide: step 1/2. Part of the phosphoribosylformylglycinamidine synthase complex involved in the purines biosynthetic pathway. Catalyzes the ATP-dependent conversion of formylglycinamide ribonucleotide (FGAR) and glutamine to yield formylglycinamidine ribonucleotide (FGAM) and glutamate. The FGAM synthase complex is composed of three subunits. PurQ produces an ammonia molecule by converting glutamine to glutamate. PurL transfers the ammonia molecule to FGAR to form FGAM in an ATP-dependent manner. PurS interacts with PurQ and PurL and is thought to assist in the transfer of the ammonia molecule from PurQ to PurL. The chain is Phosphoribosylformylglycinamidine synthase subunit PurQ from Mesorhizobium japonicum (strain LMG 29417 / CECT 9101 / MAFF 303099) (Mesorhizobium loti (strain MAFF 303099)).